The chain runs to 488 residues: UDP-N-acetylmuramoyl-L-alanyl-D-glutamate--2,6-diaminopimelate ligase (488 aa).

Residues Leu24, Ser26, and 41-43 (HQV) each bind UDP-N-acetyl-alpha-D-muramoyl-L-alanyl-D-glutamate. Position 113–119 (113–119 (GTNGKTT)) interacts with ATP. UDP-N-acetyl-alpha-D-muramoyl-L-alanyl-D-glutamate is bound by residues Asn154, 155 to 156 (TT), Ser182, Gln188, and Arg190. Lys222 carries the N6-carboxylysine modification. Meso-2,6-diaminopimelate-binding positions include Arg386, 410 to 413 (DNPR), Gly461, and Glu465. Positions 410-413 (DNPR) match the Meso-diaminopimelate recognition motif motif.

It belongs to the MurCDEF family. MurE subfamily. Requires Mg(2+) as cofactor. Post-translationally, carboxylation is probably crucial for Mg(2+) binding and, consequently, for the gamma-phosphate positioning of ATP.

It is found in the cytoplasm. The enzyme catalyses UDP-N-acetyl-alpha-D-muramoyl-L-alanyl-D-glutamate + meso-2,6-diaminopimelate + ATP = UDP-N-acetyl-alpha-D-muramoyl-L-alanyl-gamma-D-glutamyl-meso-2,6-diaminopimelate + ADP + phosphate + H(+). It functions in the pathway cell wall biogenesis; peptidoglycan biosynthesis. Functionally, catalyzes the addition of meso-diaminopimelic acid to the nucleotide precursor UDP-N-acetylmuramoyl-L-alanyl-D-glutamate (UMAG) in the biosynthesis of bacterial cell-wall peptidoglycan. The sequence is that of UDP-N-acetylmuramoyl-L-alanyl-D-glutamate--2,6-diaminopimelate ligase from Haemophilus influenzae (strain PittGG).